The sequence spans 741 residues: T-box transcription factor TBX3 (741 aa).

A DNA-binding region (T-box; first part) is located at residues 107 to 220 (LEAKELWDQF…NNISDKHGFT (114 aa)). A DNA-binding region (T-box; second part) is located at residues 241–305 (ILNSMHKYQP…NNPFAKGFRD (65 aa)). S369 carries the phosphoserine modification. Positions 369–469 (SEAESDAEAE…EGPVATKVDE (101 aa)) are disordered. 2 stretches are compositionally biased toward basic and acidic residues: residues 377-386 (AESKEEHGPE) and 420-437 (SRARDTARLDKASPDSRH). Phosphoserine occurs at positions 432, 438, 456, 705, 736, 738, and 740. Over residues 438 to 447 (SPATISSSTR) the composition is skewed to polar residues.

As to quaternary structure, interacts with PML. In terms of tissue distribution, in adults, highest levels in lung. Also found in brain, heart, kidney, liver and ovary.

The protein localises to the nucleus. Its function is as follows. Transcriptional repressor involved in developmental processes. Binds to the palindromic T site 5'-TTCACACCTAGGTGTGAA-3' DNA sequence, or a half-site, which are present in the regulatory region of several genes. Probably plays a role in limb pattern formation. Required for mammary placode induction, and maintenance of the mammary buds during development. Involved in branching morphogenesis in both developing lungs and adult mammary glands, via negative modulation of target genes; acting redundantly with TBX2. Required, together with TBX2, to maintain cell proliferation in the embryonic lung mesenchyme; perhaps acting downstream of SHH, BMP and TGFbeta signaling. Involved in modulating early inner ear development, acting independently of, and also redundantly with, TBX2 in different subregions of the developing ear. Acts as a negative regulator of PML function in cellular senescence. This is T-box transcription factor TBX3 (Tbx3) from Mus musculus (Mouse).